We begin with the raw amino-acid sequence, 284 residues long: Protein Ku (284 aa).

The region spanning 10 to 189 (TIGLVTVPVK…ELRSTEGIVP (180 aa)) is the Ku domain.

Homodimer. Interacts with host LigD.

Required for replication of viruses with short cos ends (4 bases). Stimulates dsDNA end-joining by host LigD. Binds dsDNA with either blunt, 5'- or 3-overhangs, protecting it from host exonuclease degradation. This chain is Protein Ku (87), found in Mycobacterium phage Corndog (Mycobacteriophage Corndog).